We begin with the raw amino-acid sequence, 81 residues long: MKIGPPWLTRFERARIIGIRALQISLGAPVLIQVSEELSDPITIAEKELELGLLPIIVVRWTPEGKIQEIPIKYLKLRPQL.

The protein belongs to the archaeal Rpo6/eukaryotic RPB6 RNA polymerase subunit family. As to quaternary structure, part of the RNA polymerase complex.

The protein resides in the cytoplasm. The catalysed reaction is RNA(n) + a ribonucleoside 5'-triphosphate = RNA(n+1) + diphosphate. DNA-dependent RNA polymerase (RNAP) catalyzes the transcription of DNA into RNA using the four ribonucleoside triphosphates as substrates. The protein is DNA-directed RNA polymerase subunit Rpo6 of Thermofilum pendens (strain DSM 2475 / Hrk 5).